The following is a 450-amino-acid chain: MAKGEIVTVKIEEMDFKGYGVGYCEGKPLKVRGGILGQRVAVRVKKGKKGRAEGEIVEVIERSPFEVESPCPHFGECGGCTYQNLSYENQLKIKKDVVLKLLEKEGIKDFEFLGIERSPKVYGYRNKMEYTFGTDREGKKALGLHRKGKFYDVVMTDKCNIVDEDFTKALSLTFNYALEKNLPFYDKKTHEGYLRYLVVRKASKNGELLINIVTTTQLKHKFDDLVELYRSANFSSTLVGVLHTYNDSWSDAVICEKLEVLYGRDYLIEELLGLKFKISAFSFFQTNSYGAERIYSTVREFAGDVSNKTIFDLYCGTGTIGIVMAPLARKVIGIELVEEAVFSAKENAALNGLENAVFIAGDVSKKLREIKEKPDIVVVDPPRSGVNPKALEDIVNFEPEKIIYVSCNPESFARDLRLFVDKGYAVKKVKAIDMFPHTYHVELVGLLEKS.

Residues 1 to 58 (MAKGEIVTVKIEEMDFKGYGVGYCEGKPLKVRGGILGQRVAVRVKKGKKGRAEGEIVE) form the TRAM domain. [4Fe-4S] cluster contacts are provided by cysteine 71, cysteine 77, cysteine 80, and cysteine 159. Residues glutamine 285, tyrosine 314, glutamate 335, and aspartate 380 each coordinate S-adenosyl-L-methionine. The Nucleophile role is filled by cysteine 407.

It belongs to the class I-like SAM-binding methyltransferase superfamily. RNA M5U methyltransferase family.

This is an uncharacterized protein from Caldanaerobacter subterraneus subsp. tengcongensis (strain DSM 15242 / JCM 11007 / NBRC 100824 / MB4) (Thermoanaerobacter tengcongensis).